Reading from the N-terminus, the 88-residue chain is Large ribosomal subunit protein bL27 (88 aa).

A disordered region spans residues 1–20; the sequence is MASKKGVGSTKDGRDSIAKR.

It belongs to the bacterial ribosomal protein bL27 family.

The chain is Large ribosomal subunit protein bL27 (rpmA) from Geobacillus stearothermophilus (Bacillus stearothermophilus).